A 122-amino-acid chain; its full sequence is Small ribosomal subunit protein uS13 (122 aa).

The disordered stretch occupies residues 99–122 (RGQRTHTNARTRKGPAKAIAGKKK).

This sequence belongs to the universal ribosomal protein uS13 family. In terms of assembly, part of the 30S ribosomal subunit. Forms a loose heterodimer with protein S19. Forms two bridges to the 50S subunit in the 70S ribosome.

Functionally, located at the top of the head of the 30S subunit, it contacts several helices of the 16S rRNA. In the 70S ribosome it contacts the 23S rRNA (bridge B1a) and protein L5 of the 50S subunit (bridge B1b), connecting the 2 subunits; these bridges are implicated in subunit movement. Contacts the tRNAs in the A and P-sites. The chain is Small ribosomal subunit protein uS13 from Rhizobium etli (strain ATCC 51251 / DSM 11541 / JCM 21823 / NBRC 15573 / CFN 42).